The sequence spans 253 residues: Chromosome-partitioning ATPase Soj (253 aa).

ATP is bound by residues lysine 11, glycine 12, glycine 13, valine 14, glycine 15, lysine 16, threonine 17, threonine 18, proline 211, and asparagine 213. Threonine 17 provides a ligand contact to Mg(2+).

The protein belongs to the ParA family.

It carries out the reaction ATP + H2O = ADP + phosphate + H(+). In terms of biological role, ATPase probably involved in chromosome partitioning. Cooperatively binds dsDNA, forming nucleoprotein filaments in a strictly ATP-dependent fashion. In Treponema pallidum (strain Nichols), this protein is Chromosome-partitioning ATPase Soj.